We begin with the raw amino-acid sequence, 56 residues long: Large ribosomal subunit protein bL32 (56 aa).

The interval 1–21 (MAVQKNKPTRSKRGMRRSHDA) is disordered. The segment covering 7–16 (KPTRSKRGMR) has biased composition (basic residues).

It belongs to the bacterial ribosomal protein bL32 family.

This chain is Large ribosomal subunit protein bL32, found in Hamiltonella defensa subsp. Acyrthosiphon pisum (strain 5AT).